A 437-amino-acid chain; its full sequence is Testis-specific Y-encoded-like protein 1 (437 aa).

The tract at residues 1–81 is disordered; sequence MSGLDGVKRT…QDAAGRGGTP (81 aa). Positions 11 to 26 are enriched in polar residues; sequence TPLQTHSIIISDQVPS. Residues 28–40 show a composition bias toward basic and acidic residues; sequence QDAHQYLRLRDQS. A Glycyl lysine isopeptide (Lys-Gly) (interchain with G-Cter in SUMO2) cross-link involves residue Lys156.

The protein belongs to the nucleosome assembly protein (NAP) family. Ubiquitinated by the CRL2(APPBP2) complex, which recognizes the Arg-Xaa-Xaa-Gly sequence at the C-terminus, leading to its degradation. In terms of tissue distribution, expressed in testis, ovary, liver, spleen, brain, kidney, prostate, lung, liver, and heart.

It is found in the nucleus. Its subcellular location is the nucleolus. This chain is Testis-specific Y-encoded-like protein 1 (TSPYL1), found in Homo sapiens (Human).